Reading from the N-terminus, the 346-residue chain is Glucose-6-phosphatase 3 (346 aa).

The Lumenal segment spans residues 1-24; that stretch reads MESTLSAGIIMAEALQNRLPGLEN. Residues 25–45 traverse the membrane as a helical segment; it reads MWLWVTFLGDPKNLFQFCFPA. Residues 46 to 56 are Cytoplasmic-facing; the sequence is AYYASRRLGIS. The helical transmembrane segment at 57-77 threads the bilayer; it reads VLWITFIAEWLNLVFKWFLFG. Residues 78-108 are Lumenal-facing; sequence DRPFWWVHESGYSTQTPIQIHQFPSSCETGP. Residue Arg-79 coordinates substrate. Residues 109 to 129 form a helical membrane-spanning segment; it reads GSPSGHCMITGAALWPVMTAI. Catalysis depends on His-114, which acts as the Proton donor. Topologically, residues 130–138 are cytoplasmic; the sequence is SSQVASRSR. The helical transmembrane segment at 139-159 threads the bilayer; it reads SPWVRVIPGLAYCTFLLAVGL. At 160–167 the chain is on the lumenal side; sequence SRVFLLAH. Arg-161 serves as a coordination point for substrate. Residue His-167 is the Nucleophile of the active site. Residues 168–186 traverse the membrane as a helical segment; sequence FPHQVLGGLIVGAALGWLM. Over 187–197 the chain is Cytoplasmic; the sequence is SPRVPMERELS. A helical transmembrane segment spans residues 198–218; that stretch reads FYGLTALALMLGASLMYWTLF. Over 219 to 254 the chain is Lumenal; the sequence is TLGLDLSWSINLASKWCERPEWVHMDSRPFASLSRD. A helical transmembrane segment spans residues 255–273; that stretch reads SGSALGLGIALHTPCYAQI. The Cytoplasmic portion of the chain corresponds to 274–283; sequence RRAHLGNGQK. The helical transmembrane segment at 284 to 304 threads the bilayer; sequence IACFVLAMGLLVFLEWLGYPP. Over 305–307 the chain is Lumenal; it reads QIS. Residues 308 to 328 form a helical membrane-spanning segment; it reads LFYIFNFLKYTLWPCLVLALV. At 329–346 the chain is on the cytoplasmic side; sequence PWVVHTLSDQEAPPIRSS.

This sequence belongs to the glucose-6-phosphatase family. As to expression, widely expressed. Highly expressed in heart and testis and to a lower extent in spleen, stomach, small intestine, skeletal muscle and uterus. Expressed in muscle, brain, thymus, lung, kidney, spleen and pancreas (at protein level). In the brain, expressed in astrocytes (at protein level).

It localises to the endoplasmic reticulum membrane. It carries out the reaction D-glucose 6-phosphate + H2O = D-glucose + phosphate. It functions in the pathway carbohydrate biosynthesis; gluconeogenesis. With respect to regulation, inhibited by vanadate. Its function is as follows. Hydrolyzes glucose-6-phosphate to glucose in the endoplasmic reticulum. May form with the glucose-6-phosphate transporter (SLC37A4/G6PT) a ubiquitously expressed complex responsible for glucose production through glycogenolysis and gluconeogenesis. Probably required for normal neutrophil function. This chain is Glucose-6-phosphatase 3 (G6pc3), found in Mus musculus (Mouse).